A 210-amino-acid polypeptide reads, in one-letter code: Putative 4-hydroxy-4-methyl-2-oxoglutarate aldolase (210 aa).

Residues 87–90 and R109 each bind substrate; that span reads GDFV. Residue D110 participates in a divalent metal cation binding.

This sequence belongs to the class II aldolase/RraA-like family. In terms of assembly, homotrimer. Requires a divalent metal cation as cofactor.

The catalysed reaction is 4-hydroxy-4-methyl-2-oxoglutarate = 2 pyruvate. It carries out the reaction oxaloacetate + H(+) = pyruvate + CO2. Functionally, catalyzes the aldol cleavage of 4-hydroxy-4-methyl-2-oxoglutarate (HMG) into 2 molecules of pyruvate. Also contains a secondary oxaloacetate (OAA) decarboxylase activity due to the common pyruvate enolate transition state formed following C-C bond cleavage in the retro-aldol and decarboxylation reactions. This chain is Putative 4-hydroxy-4-methyl-2-oxoglutarate aldolase, found in Halalkalibacterium halodurans (strain ATCC BAA-125 / DSM 18197 / FERM 7344 / JCM 9153 / C-125) (Bacillus halodurans).